A 1023-amino-acid chain; its full sequence is NLR family CARD domain-containing protein 4 (1023 aa).

The region spanning 1 to 88 (MNFIKENSQA…PVYQDLTGHS (88 aa)) is the CARD domain. Positions 95–298 (EEDLDVLAQS…HVGALTVEVG (204 aa)) are nucleotide-binding domain (NBD). The NACHT domain occupies 163–476 (SPCLIEGESG…VSKGNSYLKK (314 aa)). 169–176 (GESGKGKS) provides a ligand contact to ATP. Residues 356–463 (AHTQTMLFQT…RLSSLLKSRE (108 aa)) form a winged-helix domain (WHD) region. Ser533 is modified (phosphoserine). LRR repeat units follow at residues 578 to 598 (FFQG…LFDF), 655 to 678 (MQKF…DIKY), 734 to 757 (VTDL…LADS), 761 to 784 (LKNL…SLAE), 786 to 811 (LRNL…DYIV), 823 to 846 (EMKL…LHNL), 847 to 869 (VKLS…ALQG), 877 to 901 (LEQL…LLKQ), 910 to 932 (KLGL…FLEM), 935 to 962 (LRDL…VFEN), 964 to 984 (KQLV…ALVR), and 998 to 1020 (EARL…TFKL).

As to quaternary structure, homooligomer; homooligomerizes following activation of Naip proteins by pathogenic proteins such as S.typhimurium (Salmonella) flagellin or PrgJ. Component of the NLRC4 inflammasome, at least composed of NLRC4, caspase-1 (CASP1) and some NAIP family member. Interacts with EIF2AK2/PKR. Phosphorylated at Ser-533 following infection of macrophages with S.typhimurium (Salmonella). Phosphorylation is essential for NLRC4 inflammasome function to promote caspase-1 activation and pyroptosis. PRKCD phosphorylates Ser-533 in vitro.

The protein localises to the cytoplasm. Its subcellular location is the cytosol. Key component of inflammasomes that indirectly senses specific proteins from pathogenic bacteria and fungi and responds by assembling an inflammasome complex that promotes caspase-1 activation, cytokine production and macrophage pyroptosis. The NLRC4 inflammasome is activated as part of the innate immune response to a range of intracellular bacteria. This Rattus norvegicus (Rat) protein is NLR family CARD domain-containing protein 4 (Nlrc4).